Consider the following 382-residue polypeptide: uncharacterized protein (382 aa).

Transmembrane regions (helical) follow at residues 14–34 (GLLL…LWLA), 45–65 (VVSS…GYVI), 75–95 (YLAS…IGFW), 102–122 (FVAG…LMCS), 131–151 (LLAA…LLVS), 157–177 (LMSV…PLLF), 206–226 (VNGC…MPLF), 235–255 (ASIG…QWPI), 270–290 (VQVF…AMAP), 291–311 (ALFI…AWAC), 325–345 (ALLL…AMLM), and 348–368 (FSDN…LLML).

It belongs to the major facilitator superfamily. YcaD (TC 2.A.1.26) family.

The protein resides in the cell inner membrane. This is an uncharacterized protein from Escherichia coli O17:K52:H18 (strain UMN026 / ExPEC).